We begin with the raw amino-acid sequence, 37 residues long: MKVRASVKKLCRNCKIVRRNGVVRVICVEPRHKQRQG.

This sequence belongs to the bacterial ribosomal protein bL36 family.

In Acidithiobacillus ferrooxidans (strain ATCC 23270 / DSM 14882 / CIP 104768 / NCIMB 8455) (Ferrobacillus ferrooxidans (strain ATCC 23270)), this protein is Large ribosomal subunit protein bL36.